A 71-amino-acid polypeptide reads, in one-letter code: Conotoxin Bu24 (71 aa).

The first 21 residues, 1-21 (MGMRMMVTVFLLVVLATTVVS), serve as a signal peptide directing secretion. A propeptide spanning residues 22–44 (LRSNRASDGRRGIVNKLNDLVPK) is cleaved from the precursor. At N70 the chain carries Asparagine amide.

The protein belongs to the conotoxin A superfamily. Contains 3 disulfide bonds. They are not indicated here, since framework IV presents two different connectivities (I-V, II-III, IV-VI and I-III, II-V, IV-VI). Expressed by the venom duct.

The protein resides in the secreted. This chain is Conotoxin Bu24, found in Conus bullatus (Bubble cone).